The sequence spans 140 residues: Transmembrane protein 107 (140 aa).

2 helical membrane passes run 7-27 (LVPS…TLFW) and 53-73 (LVAA…GFLS). Residue Asn-79 is glycosylated (N-linked (GlcNAc...) asparagine). A run of 2 helical transmembrane segments spans residues 83-103 (SLLS…FIFE) and 113-133 (IFAF…IAVF).

In terms of assembly, part of the tectonic-like complex (also named B9 complex). Interacts with TMEM237, TMEM231, MKS1 and TMEM216.

Its subcellular location is the membrane. The protein localises to the cell projection. It localises to the cilium. Plays a role in cilia formation and embryonic patterning. Requires for normal Sonic hedgehog (Shh) signaling in the neural tube and acts in combination with GLI2 and GLI3 to pattern ventral and intermediate neuronal cell types. During ciliogenesis regulates the ciliary transition zone localization of some MKS complex proteins. The protein is Transmembrane protein 107 of Rattus norvegicus (Rat).